A 176-amino-acid polypeptide reads, in one-letter code: Cystatin-related protein 1 (176 aa).

Positions 1-26 (MCKTLHGTLLLLAIFVLFLNFSHATA) are cleaved as a signal peptide. Positions 27-31 (KRTRR) are excised as a propeptide. Residue Asn71 is glycosylated (N-linked (GlcNAc...) asparagine). 2 disulfides stabilise this stretch: Cys129–Cys139 and Cys153–Cys173.

This sequence belongs to the cystatin family. As to expression, prostate and lacrimal gland.

This Rattus norvegicus (Rat) protein is Cystatin-related protein 1 (Andpro).